We begin with the raw amino-acid sequence, 132 residues long: Transcription antitermination protein NusB (132 aa).

The protein belongs to the NusB family.

Functionally, involved in transcription antitermination. Required for transcription of ribosomal RNA (rRNA) genes. Binds specifically to the boxA antiterminator sequence of the ribosomal RNA (rrn) operons. This chain is Transcription antitermination protein NusB, found in Campylobacter jejuni subsp. jejuni serotype O:6 (strain 81116 / NCTC 11828).